A 501-amino-acid polypeptide reads, in one-letter code: ATP synthase subunit alpha (501 aa).

170-177 (GDRQTGKS) is an ATP binding site.

Belongs to the ATPase alpha/beta chains family. As to quaternary structure, F-type ATPases have 2 components, CF(1) - the catalytic core - and CF(0) - the membrane proton channel. CF(1) has five subunits: alpha(3), beta(3), gamma(1), delta(1), epsilon(1). CF(0) has three main subunits: a(1), b(2) and c(9-12). The alpha and beta chains form an alternating ring which encloses part of the gamma chain. CF(1) is attached to CF(0) by a central stalk formed by the gamma and epsilon chains, while a peripheral stalk is formed by the delta and b chains.

The protein resides in the cell membrane. It carries out the reaction ATP + H2O + 4 H(+)(in) = ADP + phosphate + 5 H(+)(out). Produces ATP from ADP in the presence of a proton gradient across the membrane. The alpha chain is a regulatory subunit. The chain is ATP synthase subunit alpha from Acholeplasma laidlawii (strain PG-8A).